Here is a 583-residue protein sequence, read N- to C-terminus: Proline--tRNA ligase (583 aa).

This sequence belongs to the class-II aminoacyl-tRNA synthetase family. ProS type 1 subfamily. As to quaternary structure, homodimer.

The protein localises to the cytoplasm. It carries out the reaction tRNA(Pro) + L-proline + ATP = L-prolyl-tRNA(Pro) + AMP + diphosphate. Functionally, catalyzes the attachment of proline to tRNA(Pro) in a two-step reaction: proline is first activated by ATP to form Pro-AMP and then transferred to the acceptor end of tRNA(Pro). As ProRS can inadvertently accommodate and process non-cognate amino acids such as alanine and cysteine, to avoid such errors it has two additional distinct editing activities against alanine. One activity is designated as 'pretransfer' editing and involves the tRNA(Pro)-independent hydrolysis of activated Ala-AMP. The other activity is designated 'posttransfer' editing and involves deacylation of mischarged Ala-tRNA(Pro). The misacylated Cys-tRNA(Pro) is not edited by ProRS. This chain is Proline--tRNA ligase, found in Acidothermus cellulolyticus (strain ATCC 43068 / DSM 8971 / 11B).